The chain runs to 277 residues: Shikimate dehydrogenase (NADP(+)) (277 aa).

Residues 15–17 and T62 contribute to the shikimate site; that span reads SLS. K66 (proton acceptor) is an active-site residue. Shikimate-binding residues include N87 and D102. Residues 127 to 131, 151 to 156, and I219 contribute to the NADP(+) site; these read GAGGA and NRTVDK. Residue Y221 participates in shikimate binding. NADP(+) is bound at residue G242.

It belongs to the shikimate dehydrogenase family. As to quaternary structure, homodimer.

The catalysed reaction is shikimate + NADP(+) = 3-dehydroshikimate + NADPH + H(+). The protein operates within metabolic intermediate biosynthesis; chorismate biosynthesis; chorismate from D-erythrose 4-phosphate and phosphoenolpyruvate: step 4/7. Functionally, involved in the biosynthesis of the chorismate, which leads to the biosynthesis of aromatic amino acids. Catalyzes the reversible NADPH linked reduction of 3-dehydroshikimate (DHSA) to yield shikimate (SA). In Bacillus cereus (strain AH820), this protein is Shikimate dehydrogenase (NADP(+)).